The chain runs to 430 residues: KIN17-like protein (430 aa).

The C2H2-type zinc-finger motif lies at 28–50 (CQMCQKQCRDENGFKCHCMSESH). A winged helix-turn-helix (wHTH) region spans residues 51–160 (QRQMQVFGQA…KARLKRKRIK (110 aa)). A coiled-coil region spans residues 147–183 (EQAVKARLKRKRIKSDLAEDERQERMIARQIERAQQS). A Nuclear localization signal (NLS) motif is present at residues 155–158 (KRKR). Disordered stretches follow at residues 179–230 (RAQQ…ANKA) and 261–284 (EEED…GKDA). Acidic residues predominate over residues 191–224 (LGDDASPDGSEGESGSEDEYSDSENDHEGQEEDA). The span at 261 to 278 (EEEDEVSARDKEKEELAK) shows a compositional bias: basic and acidic residues. Residues 283 to 312 (DAINAAEARRSALDELMKEEEKAKERSNRK) adopt a coiled-coil conformation. Residues 319–370 (GIVVKVMSKSLAEKGYCKQKGVVKRVIDKYVGEIEMLESKHVLRVDQDELET) form a C-terminal subdomain A region. Positions 376–427 (GGLVRIVNGAYRGSNARLLSVDTERFCAKVQVEKGLYDGKVLKAIEYEDICK) are C-terminal subdomain B.

It belongs to the KIN17 family.

Its subcellular location is the nucleus. The sequence is that of KIN17-like protein from Oryza sativa subsp. japonica (Rice).